A 959-amino-acid polypeptide reads, in one-letter code: Translation initiation factor IF-2 (959 aa).

Positions S33–L373 are disordered. The span at I46–A60 shows a compositional bias: polar residues. Over residues A63–A73 the composition is skewed to basic and acidic residues. Residues A76–S100 are compositionally biased toward low complexity. Composition is skewed to basic and acidic residues over residues F112–A125, S134–Q143, and N179–R192. Polar residues predominate over residues S193–A211. Basic and acidic residues-rich tracts occupy residues A234–A258 and Q266–P276. Residues A277–A287 are compositionally biased toward low complexity. Residues N306–K323 show a composition bias toward basic and acidic residues. Residues S328–N346 show a composition bias toward low complexity. Positions K347–N357 are enriched in basic residues. One can recognise a tr-type G domain in the interval E460–K629. The segment at G469–T476 is G1. G469–T476 serves as a coordination point for GTP. A G2 region spans residues G494–H498. The tract at residues D515 to G518 is G3. GTP is bound by residues D515–H519 and N569–D572. The G4 stretch occupies residues N569–D572. A G5 region spans residues S605–K607.

Belongs to the TRAFAC class translation factor GTPase superfamily. Classic translation factor GTPase family. IF-2 subfamily.

It localises to the cytoplasm. Functionally, one of the essential components for the initiation of protein synthesis. Protects formylmethionyl-tRNA from spontaneous hydrolysis and promotes its binding to the 30S ribosomal subunits. Also involved in the hydrolysis of GTP during the formation of the 70S ribosomal complex. This chain is Translation initiation factor IF-2, found in Streptococcus equi subsp. zooepidemicus (strain H70).